A 68-amino-acid chain; its full sequence is Small ribosomal subunit protein bS21 (68 aa).

It belongs to the bacterial ribosomal protein bS21 family.

This Dinoroseobacter shibae (strain DSM 16493 / NCIMB 14021 / DFL 12) protein is Small ribosomal subunit protein bS21.